A 369-amino-acid polypeptide reads, in one-letter code: Glutamine synthetase 2 cytoplasmic (369 aa).

One can recognise a GS beta-grasp domain in the interval 32-112 (VQATYVWIDG…VMCDTYKFDG (81 aa)). The GS catalytic domain occupies 119–369 (KRKTCLEVAN…AILRTICLDE (251 aa)).

Belongs to the glutamine synthetase family. As to quaternary structure, homooctamer.

It is found in the cytoplasm. It carries out the reaction L-glutamate + NH4(+) + ATP = L-glutamine + ADP + phosphate + H(+). The polypeptide is Glutamine synthetase 2 cytoplasmic (Gs2) (Drosophila melanogaster (Fruit fly)).